The chain runs to 274 residues: Urease accessory protein UreD (274 aa).

It belongs to the UreD family. UreD, UreF and UreG form a complex that acts as a GTP-hydrolysis-dependent molecular chaperone, activating the urease apoprotein by helping to assemble the nickel containing metallocenter of UreC. The UreE protein probably delivers the nickel.

The protein resides in the cytoplasm. In terms of biological role, required for maturation of urease via the functional incorporation of the urease nickel metallocenter. This is Urease accessory protein UreD from Lachnoclostridium phytofermentans (strain ATCC 700394 / DSM 18823 / ISDg) (Clostridium phytofermentans).